A 473-amino-acid polypeptide reads, in one-letter code: Ribulose bisphosphate carboxylase large chain (473 aa).

Substrate-binding residues include Asn116 and Thr166. Lys168 acts as the Proton acceptor in catalysis. Residue Lys170 coordinates substrate. Mg(2+) is bound by residues Lys194, Asp196, and Glu197. An N6-carboxylysine modification is found at Lys194. The active-site Proton acceptor is the His287. Substrate is bound by residues Arg288, His320, and Ser372.

The protein belongs to the RuBisCO large chain family. Type I subfamily. In terms of assembly, heterohexadecamer of 8 large chains and 8 small chains. The cofactor is Mg(2+).

The enzyme catalyses 2 (2R)-3-phosphoglycerate + 2 H(+) = D-ribulose 1,5-bisphosphate + CO2 + H2O. It carries out the reaction D-ribulose 1,5-bisphosphate + O2 = 2-phosphoglycolate + (2R)-3-phosphoglycerate + 2 H(+). RuBisCO catalyzes two reactions: the carboxylation of D-ribulose 1,5-bisphosphate, the primary event in carbon dioxide fixation, as well as the oxidative fragmentation of the pentose substrate. Both reactions occur simultaneously and in competition at the same active site. The sequence is that of Ribulose bisphosphate carboxylase large chain from Methylococcus capsulatus (strain ATCC 33009 / NCIMB 11132 / Bath).